The sequence spans 146 residues: Pre-mRNA-splicing factor cwf14 (146 aa).

The protein belongs to the BUD31 (G10) family. Belongs to the 40S cdc5-associated complex (or cwf complex), a spliceosome sub-complex reminiscent of a late-stage spliceosome composed of the U2, U5 and U6 snRNAs and at least brr2, cdc5, cwf2/prp3, cwf3/syf1, cwf4/syf3, cwf5/ecm2, spp42/cwf6, cwf7/spf27, cwf8, cwf9, cwf10, cwf11, cwf12, prp45/cwf13, cwf14, cwf15, cwf16, cwf17, cwf18, cwf19, cwf20, cwf21, cwf22, cwf23, cwf24, cwf25, cwf26, cyp7/cwf27, cwf28, cwf29/ist3, lea1, msl1, prp5/cwf1, prp10, prp12/sap130, prp17, prp22, sap61, sap62, sap114, sap145, slu7, smb1, smd1, smd3, smf1, smg1 and syf2.

Its subcellular location is the nucleus. Functionally, involved in mRNA splicing where it associates with cdc5 and the other cwf proteins as part of the spliceosome. The polypeptide is Pre-mRNA-splicing factor cwf14 (cwf14) (Schizosaccharomyces pombe (strain 972 / ATCC 24843) (Fission yeast)).